The sequence spans 702 residues: Ribosomal RNA large subunit methyltransferase K/L (702 aa).

One can recognise a THUMP domain in the interval 43-154 (LVYQSLMWSR…KETASIALDL (112 aa)).

It belongs to the methyltransferase superfamily. RlmKL family.

The protein localises to the cytoplasm. It carries out the reaction guanosine(2445) in 23S rRNA + S-adenosyl-L-methionine = N(2)-methylguanosine(2445) in 23S rRNA + S-adenosyl-L-homocysteine + H(+). The catalysed reaction is guanosine(2069) in 23S rRNA + S-adenosyl-L-methionine = N(2)-methylguanosine(2069) in 23S rRNA + S-adenosyl-L-homocysteine + H(+). Its function is as follows. Specifically methylates the guanine in position 2445 (m2G2445) and the guanine in position 2069 (m7G2069) of 23S rRNA. The polypeptide is Ribosomal RNA large subunit methyltransferase K/L (Shigella dysenteriae serotype 1 (strain Sd197)).